A 451-amino-acid chain; its full sequence is Chromosomal replication initiator protein DnaA (451 aa).

Positions 1 to 72 (MQSIEDIWQE…ANILQEITGR (72 aa)) are domain I, interacts with DnaA modulators. Positions 72–108 (RLFDVRFIDGEQEENFEYTVIKPNPALDEDGIEIGKH) are domain II. Residues 109-325 (MLNPRYVFDT…GALIRVVAYS (217 aa)) form a domain III, AAA+ region region. ATP contacts are provided by glycine 153, glycine 155, lysine 156, and threonine 157. A domain IV, binds dsDNA region spans residues 326–451 (SLVNKDITAG…KNLRKAQNMF (126 aa)).

The protein belongs to the DnaA family. In terms of assembly, oligomerizes as a right-handed, spiral filament on DNA at oriC.

The protein resides in the cytoplasm. In terms of biological role, plays an essential role in the initiation and regulation of chromosomal replication. ATP-DnaA binds to the origin of replication (oriC) to initiate formation of the DNA replication initiation complex once per cell cycle. Binds the DnaA box (a 9 base pair repeat at the origin) and separates the double-stranded (ds)DNA. Forms a right-handed helical filament on oriC DNA; dsDNA binds to the exterior of the filament while single-stranded (ss)DNA is stabiized in the filament's interior. The ATP-DnaA-oriC complex binds and stabilizes one strand of the AT-rich DNA unwinding element (DUE), permitting loading of DNA polymerase. After initiation quickly degrades to an ADP-DnaA complex that is not apt for DNA replication. Binds acidic phospholipids. In Listeria monocytogenes serotype 4b (strain F2365), this protein is Chromosomal replication initiator protein DnaA.